Consider the following 156-residue polypeptide: Transcription elongation factor GreA (156 aa).

Residues 12-72 are a coiled coil; sequence YKKLEDELST…KEIEHELKYA (61 aa).

Belongs to the GreA/GreB family.

In terms of biological role, necessary for efficient RNA polymerase transcription elongation past template-encoded arresting sites. The arresting sites in DNA have the property of trapping a certain fraction of elongating RNA polymerases that pass through, resulting in locked ternary complexes. Cleavage of the nascent transcript by cleavage factors such as GreA or GreB allows the resumption of elongation from the new 3'terminus. GreA releases sequences of 2 to 3 nucleotides. This Dehalococcoides mccartyi (strain ATCC BAA-2266 / KCTC 15142 / 195) (Dehalococcoides ethenogenes (strain 195)) protein is Transcription elongation factor GreA.